The primary structure comprises 1596 residues: SET-binding protein (1596 aa).

Residues 1 to 12 (MESRETLSSSRQ) show a composition bias toward polar residues. Disordered regions lie at residues 1-83 (MESR…WVAG), 134-426 (KQSG…SIKA), and 475-518 (SPSV…SRKL). Over residues 64–81 (GSGRDVDSNSNADSEKWV) the composition is skewed to basic and acidic residues. Residues 164 to 175 (LTASDLAASDLK) are compositionally biased toward low complexity. Polar residues-rich tracts occupy residues 213–236 (KSSS…QNCF) and 270–282 (AGNT…NNNK). Residues 290-306 (APSPSSHSSPAPPSSSA) are compositionally biased toward low complexity. The span at 363–372 (DNTEGKREGY) shows a compositional bias: basic and acidic residues. The span at 375–395 (DSAQEASPARQNVSSASNPEN) shows a compositional bias: polar residues. A DNA-binding region (a.T hook 1) is located at residues 584-596 (KKKRGRPKKQPLL). Disordered stretches follow at residues 604-624 (GTST…KKRK), 722-763 (YIGK…AVPS), and 777-796 (HPLS…ASTE). Residues 779 to 796 (LSTQLGGSNGNLSPASTE) are compositionally biased toward polar residues. Residue K817 is modified to N6-acetyllysine. Positions 854–880 (SPVSESHSEETIPSDSGIGTDNNSTSD) are enriched in polar residues. The segment at 854–889 (SPVSESHSEETIPSDSGIGTDNNSTSDQAEKSSESR) is disordered. The segment at residues 1016 to 1028 (KKKRGRPAKTNDT) is a DNA-binding region (a.T hook 2). 6 disordered regions span residues 1134-1164 (PPKV…DRIL), 1202-1225 (EKNK…SKNN), 1245-1300 (AKEK…GSKR), 1325-1344 (SSYD…KVDQ), 1440-1473 (QRQS…DQMP), and 1518-1596 (EAPP…EVLP). Positions 1146 to 1159 (RLHKRKHKHKHKHK) are enriched in basic residues. Positions 1450–1459 (VKKRRGRPRK) are enriched in basic residues. A DNA-binding region (a.T hook 3) is located at residues 1451-1463 (KKRRGRPRKQPTQ). 3 tandem repeats follow at residues 1520-1527 (PPLPPPPP), 1528-1535 (PPLPPPPP), and 1536-1543 (PPLPPPPP). The tract at residues 1520 to 1543 (PPLPPPPPPPLPPPPPPPLPPPPP) is 3 X 8 AA tandem repeats of P-P-L-P-P-P-P-P. Composition is skewed to pro residues over residues 1520 to 1546 (PPLP…PLPK) and 1560 to 1572 (PAQP…PQQP).

In terms of assembly, interacts with SET. Expressed in numerous tissues. Expressed at low levels in myeloid and monocytic cells as well as in CD34+ cells; expression levels are higher in myeloid malignancies.

It localises to the nucleus. This Homo sapiens (Human) protein is SET-binding protein (SETBP1).